The primary structure comprises 354 residues: DNA replication and repair protein RecF (354 aa).

Residue 30–37 (GDNGSGKT) coordinates ATP.

Belongs to the RecF family.

It localises to the cytoplasm. The RecF protein is involved in DNA metabolism; it is required for DNA replication and normal SOS inducibility. RecF binds preferentially to single-stranded, linear DNA. It also seems to bind ATP. This chain is DNA replication and repair protein RecF, found in Idiomarina loihiensis (strain ATCC BAA-735 / DSM 15497 / L2-TR).